The sequence spans 131 residues: Small ribosomal subunit protein uS8 (131 aa).

This sequence belongs to the universal ribosomal protein uS8 family. In terms of assembly, part of the 30S ribosomal subunit. Contacts proteins S5 and S12.

Functionally, one of the primary rRNA binding proteins, it binds directly to 16S rRNA central domain where it helps coordinate assembly of the platform of the 30S subunit. The chain is Small ribosomal subunit protein uS8 from Bordetella petrii (strain ATCC BAA-461 / DSM 12804 / CCUG 43448).